A 454-amino-acid chain; its full sequence is Divalent metal cation transporter MntH (454 aa).

Residues 1–21 (MSDAEATAPRSSWRFAGRDED) are disordered. 11 consecutive transmembrane segments (helical) span residues 45-65 (LFAF…PGNW), 78-98 (TLLF…ALAA), 122-142 (FVLW…EVIG), 153-173 (IPLI…LLLM), 182-202 (AFVI…IFVA), 220-240 (IVTN…TVMP), 275-295 (IALM…AVAF), 312-332 (LLSP…ALLA), 368-388 (GLAI…GTGQ), 389-409 (LLVF…VPLV), and 426-446 (GVAA…FKLL).

The protein belongs to the NRAMP family.

Its subcellular location is the cell inner membrane. H(+)-stimulated, divalent metal cation uptake system. This Mesorhizobium japonicum (strain LMG 29417 / CECT 9101 / MAFF 303099) (Mesorhizobium loti (strain MAFF 303099)) protein is Divalent metal cation transporter MntH.